The sequence spans 128 residues: Large ribosomal subunit protein bL12 (128 aa).

This sequence belongs to the bacterial ribosomal protein bL12 family. As to quaternary structure, homodimer. Part of the ribosomal stalk of the 50S ribosomal subunit. Forms a multimeric L10(L12)X complex, where L10 forms an elongated spine to which 2 to 4 L12 dimers bind in a sequential fashion. Binds GTP-bound translation factors.

Functionally, forms part of the ribosomal stalk which helps the ribosome interact with GTP-bound translation factors. Is thus essential for accurate translation. The polypeptide is Large ribosomal subunit protein bL12 (Sorangium cellulosum (strain So ce56) (Polyangium cellulosum (strain So ce56))).